Here is a 467-residue protein sequence, read N- to C-terminus: Glutamate--tRNA ligase (467 aa).

A 'HIGH' region motif is present at residues 9–19 (PSPTGFLHIGG). The 'KMSKS' region signature appears at 250–254 (KLSKR). Lys-253 contributes to the ATP binding site.

Belongs to the class-I aminoacyl-tRNA synthetase family. Glutamate--tRNA ligase type 1 subfamily. In terms of assembly, monomer.

The protein resides in the cytoplasm. The enzyme catalyses tRNA(Glu) + L-glutamate + ATP = L-glutamyl-tRNA(Glu) + AMP + diphosphate. Its function is as follows. Catalyzes the attachment of glutamate to tRNA(Glu) in a two-step reaction: glutamate is first activated by ATP to form Glu-AMP and then transferred to the acceptor end of tRNA(Glu). In Mesomycoplasma hyopneumoniae (strain 7448) (Mycoplasma hyopneumoniae), this protein is Glutamate--tRNA ligase.